The primary structure comprises 343 residues: Small ribosomal subunit biogenesis GTPase RsgA (343 aa).

Residues arginine 116 to phenylalanine 275 enclose the CP-type G domain. GTP is bound by residues asparagine 163–aspartate 166 and glycine 217–serine 225. Zn(2+)-binding residues include cysteine 299, cysteine 304, histidine 306, and cysteine 312.

This sequence belongs to the TRAFAC class YlqF/YawG GTPase family. RsgA subfamily. As to quaternary structure, monomer. Associates with 30S ribosomal subunit, binds 16S rRNA. The cofactor is Zn(2+).

It is found in the cytoplasm. In terms of biological role, one of several proteins that assist in the late maturation steps of the functional core of the 30S ribosomal subunit. Helps release RbfA from mature subunits. May play a role in the assembly of ribosomal proteins into the subunit. Circularly permuted GTPase that catalyzes slow GTP hydrolysis, GTPase activity is stimulated by the 30S ribosomal subunit. The polypeptide is Small ribosomal subunit biogenesis GTPase RsgA (Pseudomonas fluorescens (strain SBW25)).